The sequence spans 199 residues: Inosine triphosphate pyrophosphatase (199 aa).

12–17 (TGNAKK) lines the ITP pocket. E42 contacts Mg(2+). Residues K54, 70-71 (DT), K87, 146-149 (FGWD), K169, and 174-175 (HR) contribute to the ITP site.

Belongs to the HAM1 NTPase family. As to quaternary structure, homodimer. Requires Mg(2+) as cofactor. The cofactor is Mn(2+).

It localises to the cytoplasm. The enzyme catalyses ITP + H2O = IMP + diphosphate + H(+). The catalysed reaction is dITP + H2O = dIMP + diphosphate + H(+). It catalyses the reaction XTP + H2O = XMP + diphosphate + H(+). In terms of biological role, pyrophosphatase that hydrolyzes non-canonical purine nucleotides such as inosine triphosphate (ITP), deoxyinosine triphosphate (dITP) or xanthosine 5'-triphosphate (XTP) to their respective monophosphate derivatives. The enzyme does not distinguish between the deoxy- and ribose forms. Probably excludes non-canonical purines from RNA and DNA precursor pools, thus preventing their incorporation into RNA and DNA and avoiding chromosomal lesions. In Monosiga brevicollis (Choanoflagellate), this protein is Inosine triphosphate pyrophosphatase.